Reading from the N-terminus, the 89-residue chain is Small ribosomal subunit protein uS15 (89 aa).

The protein belongs to the universal ribosomal protein uS15 family. As to quaternary structure, part of the 30S ribosomal subunit. Forms a bridge to the 50S subunit in the 70S ribosome, contacting the 23S rRNA.

In terms of biological role, one of the primary rRNA binding proteins, it binds directly to 16S rRNA where it helps nucleate assembly of the platform of the 30S subunit by binding and bridging several RNA helices of the 16S rRNA. Its function is as follows. Forms an intersubunit bridge (bridge B4) with the 23S rRNA of the 50S subunit in the ribosome. The sequence is that of Small ribosomal subunit protein uS15 from Yersinia enterocolitica serotype O:8 / biotype 1B (strain NCTC 13174 / 8081).